Here is a 561-residue protein sequence, read N- to C-terminus: Asparagine synthetase [glutamine-hydrolyzing] (561 aa).

Residue Cys2 is the For GATase activity of the active site. Positions 2-191 (CGIWALFGSD…PGHYEVLDLK (190 aa)) constitute a Glutamine amidotransferase type-2 domain. L-glutamine contacts are provided by residues 49–53 (RLAVV), 75–77 (NGE), and Asp97. An Asparagine synthetase domain is found at 213–536 (HALYDNVEKL…PGRADWLSHY (324 aa)). ATP-binding positions include Leu256, Ile288, and 363 to 364 (SG). Position 385 is an N6-acetyllysine (Lys385). At Thr545 the chain carries Phosphothreonine. Position 557 is a phosphoserine (Ser557).

It catalyses the reaction L-aspartate + L-glutamine + ATP + H2O = L-asparagine + L-glutamate + AMP + diphosphate + H(+). The protein operates within amino-acid biosynthesis; L-asparagine biosynthesis; L-asparagine from L-aspartate (L-Gln route): step 1/1. In Homo sapiens (Human), this protein is Asparagine synthetase [glutamine-hydrolyzing] (ASNS).